Consider the following 198-residue polypeptide: Orotate phosphoribosyltransferase (198 aa).

Residues Arg-108, Lys-109, Lys-112, His-114, and 135-143 (EDVVTTGKS) each bind 5-phospho-alpha-D-ribose 1-diphosphate. Thr-139 and Arg-167 together coordinate orotate.

Belongs to the purine/pyrimidine phosphoribosyltransferase family. PyrE subfamily. Homodimer. Requires Mg(2+) as cofactor.

It carries out the reaction orotidine 5'-phosphate + diphosphate = orotate + 5-phospho-alpha-D-ribose 1-diphosphate. It participates in pyrimidine metabolism; UMP biosynthesis via de novo pathway; UMP from orotate: step 1/2. Functionally, catalyzes the transfer of a ribosyl phosphate group from 5-phosphoribose 1-diphosphate to orotate, leading to the formation of orotidine monophosphate (OMP). In Synechocystis sp. (strain ATCC 27184 / PCC 6803 / Kazusa), this protein is Orotate phosphoribosyltransferase.